A 331-amino-acid polypeptide reads, in one-letter code: UBX domain-containing protein 2B (331 aa).

Disordered regions lie at residues 1–26 (MAEG…SARD) and 38–63 (EMKC…PPLR). The residue at position 2 (Ala2) is an N-acetylalanine. Basic and acidic residues predominate over residues 38–48 (EMKCKSSKPDR). The residue at position 56 (Ser56) is a Phosphoserine. Residue Thr59 is modified to Phosphothreonine. Ser66 is modified (phosphoserine). In terms of domain architecture, SEP spans 141–206 (DVQILLRLWS…MEDHQDQEYI (66 aa)). A phosphoserine mark is found at Ser231, Ser234, and Ser235. Residues 252–329 (DSVPTTKIQI…DILNTVILQQ (78 aa)) enclose the UBX domain.

The protein belongs to the NSFL1C family. As to quaternary structure, interacts with VCP. Does not bind ubiquitin. Present at high level in brain. Also present in liver, kidney, spleen, testis, lung and heart (at protein level).

The protein localises to the nucleus. Its subcellular location is the cytoplasm. The protein resides in the cytosol. It localises to the endoplasmic reticulum. It is found in the golgi apparatus. The protein localises to the cytoskeleton. Its subcellular location is the microtubule organizing center. The protein resides in the centrosome. Adapter protein required for Golgi and endoplasmic reticulum biogenesis. Involved in Golgi and endoplasmic reticulum maintenance during interphase and in their reassembly at the end of mitosis. The complex formed with VCP has membrane fusion activity; membrane fusion activity requires USO1-GOLGA2 tethering and BET1L. VCPIP1 is also required, but not its deubiquitinating activity. Together with NSFL1C/p47, regulates the centrosomal levels of kinase AURKA/Aurora A during mitotic progression by promoting AURKA removal from centrosomes in prophase. Also, regulates spindle orientation during mitosis. The chain is UBX domain-containing protein 2B (Ubxn2b) from Rattus norvegicus (Rat).